Consider the following 325-residue polypeptide: Replication factor C small subunit (325 aa).

54-61 (GPAGTGKT) is a binding site for ATP.

Belongs to the activator 1 small subunits family. RfcS subfamily. In terms of assembly, heteromultimer composed of small subunits (RfcS) and large subunits (RfcL).

Its function is as follows. Part of the RFC clamp loader complex which loads the PCNA sliding clamp onto DNA. The sequence is that of Replication factor C small subunit from Haloarcula marismortui (strain ATCC 43049 / DSM 3752 / JCM 8966 / VKM B-1809) (Halobacterium marismortui).